Here is a 226-residue protein sequence, read N- to C-terminus: Tyramine N-feruloyltransferase 10/30 (226 aa).

Positions 29 to 45 (HIYKLFYQIHEYHNYTH) are important in binding site and for catalytic activity. The N-acetyltransferase domain maps to 72–222 (VLLLEVSPTP…VGDALQKYAD (151 aa)).

The protein belongs to the acetyltransferase family. Homodimer.

The protein resides in the cytoplasm. It catalyses the reaction tyramine + (E)-feruloyl-CoA = N-[(E)-feruloyl]tyramine + CoA + H(+). Inhibited by (2-hydroxyphenyl)amino sulfinyl acetic acid 1,1-dimethylethyl ester, by DEPC and by N-ethylmaleimide. Its function is as follows. Synthesizes amides which are involved in stress response in the cell wall. Catalyzes the synthesis of hydroxycinnamic acid amides from hydroxycinnamoyl-CoA thioesters and various hydroxyphenylethylamines such as 4-coumaroyl-CoA and sinapoyl-CoA. The chain is Tyramine N-feruloyltransferase 10/30 (THT10) from Nicotiana tabacum (Common tobacco).